The following is a 613-amino-acid chain: Dihydroxy-acid dehydratase (613 aa).

Aspartate 81 contributes to the Mg(2+) binding site. Cysteine 122 is a binding site for [2Fe-2S] cluster. Mg(2+) contacts are provided by aspartate 123 and lysine 124. An N6-carboxylysine modification is found at lysine 124. Cysteine 195 is a binding site for [2Fe-2S] cluster. Mg(2+) is bound at residue glutamate 491. Serine 517 serves as the catalytic Proton acceptor.

It belongs to the IlvD/Edd family. In terms of assembly, homodimer. It depends on [2Fe-2S] cluster as a cofactor. Requires Mg(2+) as cofactor.

The enzyme catalyses (2R)-2,3-dihydroxy-3-methylbutanoate = 3-methyl-2-oxobutanoate + H2O. It carries out the reaction (2R,3R)-2,3-dihydroxy-3-methylpentanoate = (S)-3-methyl-2-oxopentanoate + H2O. Its pathway is amino-acid biosynthesis; L-isoleucine biosynthesis; L-isoleucine from 2-oxobutanoate: step 3/4. It participates in amino-acid biosynthesis; L-valine biosynthesis; L-valine from pyruvate: step 3/4. Its function is as follows. Functions in the biosynthesis of branched-chain amino acids. Catalyzes the dehydration of (2R,3R)-2,3-dihydroxy-3-methylpentanoate (2,3-dihydroxy-3-methylvalerate) into 2-oxo-3-methylpentanoate (2-oxo-3-methylvalerate) and of (2R)-2,3-dihydroxy-3-methylbutanoate (2,3-dihydroxyisovalerate) into 2-oxo-3-methylbutanoate (2-oxoisovalerate), the penultimate precursor to L-isoleucine and L-valine, respectively. The protein is Dihydroxy-acid dehydratase of Aeromonas hydrophila subsp. hydrophila (strain ATCC 7966 / DSM 30187 / BCRC 13018 / CCUG 14551 / JCM 1027 / KCTC 2358 / NCIMB 9240 / NCTC 8049).